The following is a 505-amino-acid chain: Protein MGF 505-4R (505 aa).

This sequence belongs to the asfivirus MGF 505 family.

In terms of biological role, plays a role in virus cell tropism, and may be required for efficient virus replication in macrophages. The polypeptide is Protein MGF 505-4R (Ornithodoros (relapsing fever ticks)).